A 158-amino-acid polypeptide reads, in one-letter code: Protein Smg homolog (158 aa).

The protein belongs to the Smg family.

The chain is Protein Smg homolog from Pseudoalteromonas atlantica (strain T6c / ATCC BAA-1087).